A 132-amino-acid polypeptide reads, in one-letter code: Proline-rich protein sgp2 (132 aa).

A signal peptide spans 1 to 20 (MKYCFVFFVTLICLIANCSA). Disordered stretches follow at residues 23–62 (EGDK…SNSR) and 87–132 (GASV…LGLP). A compositionally biased stretch (basic and acidic residues) spans 36–47 (KQIERASDKTSE). Residues 51–62 (GNTNAQGDSNSR) show a composition bias toward polar residues. Over residues 91–105 (PQLPDLPTTPSLPDM) the composition is skewed to low complexity.

It localises to the secreted. This Glossina morsitans morsitans (Savannah tsetse fly) protein is Proline-rich protein sgp2 (sgp2).